The following is a 231-amino-acid chain: Probable transaldolase (231 aa).

Residue Lys-83 is the Schiff-base intermediate with substrate of the active site.

This sequence belongs to the transaldolase family. Type 3B subfamily.

It is found in the cytoplasm. It catalyses the reaction D-sedoheptulose 7-phosphate + D-glyceraldehyde 3-phosphate = D-erythrose 4-phosphate + beta-D-fructose 6-phosphate. It participates in carbohydrate degradation; pentose phosphate pathway; D-glyceraldehyde 3-phosphate and beta-D-fructose 6-phosphate from D-ribose 5-phosphate and D-xylulose 5-phosphate (non-oxidative stage): step 2/3. Transaldolase is important for the balance of metabolites in the pentose-phosphate pathway. This is Probable transaldolase from Rhodospirillum centenum (strain ATCC 51521 / SW).